Here is a 504-residue protein sequence, read N- to C-terminus: Galactose/methyl galactoside import ATP-binding protein MglA (504 aa).

2 ABC transporter domains span residues 8-247 (LEMN…VGRD) and 258-504 (TPGE…TRFI). 40–47 (GENGAGKS) provides a ligand contact to ATP.

This sequence belongs to the ABC transporter superfamily. Galactose/methyl galactoside importer (TC 3.A.1.2.3) family. The complex is composed of one ATP-binding protein (MglA), two transmembrane proteins (MglC) and a solute-binding protein (MglB).

It localises to the cell membrane. It catalyses the reaction D-galactose(out) + ATP + H2O = D-galactose(in) + ADP + phosphate + H(+). The catalysed reaction is methyl beta-D-galactoside(out) + ATP + H2O = methyl beta-D-galactoside(in) + ADP + phosphate + H(+). Its function is as follows. Part of the ABC transporter complex MglABC involved in galactose/methyl galactoside import. Responsible for energy coupling to the transport system. The chain is Galactose/methyl galactoside import ATP-binding protein MglA from Clostridium tetani (strain Massachusetts / E88).